Here is a 122-residue protein sequence, read N- to C-terminus: Acidic phospholipase A2 BpirPLA2-I (122 aa).

7 disulfide bridges follow: cysteine 26–cysteine 115, cysteine 28–cysteine 44, cysteine 43–cysteine 95, cysteine 49–cysteine 122, cysteine 50–cysteine 88, cysteine 57–cysteine 81, and cysteine 75–cysteine 86. The Ca(2+) site is built by tyrosine 27, glycine 29, and glycine 31. Residue histidine 47 is part of the active site. Aspartate 48 is a binding site for Ca(2+). The active site involves aspartate 89. The short motif at 105–117 (IKYWFYGAKNCQE) is the Antiplatelet activity element.

The protein belongs to the phospholipase A2 family. Group II subfamily. D49 sub-subfamily. It depends on Ca(2+) as a cofactor. In terms of tissue distribution, expressed by the venom gland.

It is found in the secreted. It carries out the reaction a 1,2-diacyl-sn-glycero-3-phosphocholine + H2O = a 1-acyl-sn-glycero-3-phosphocholine + a fatty acid + H(+). Inhibited by EDTA and p-bromophenacyl bromide (BPB). Snake venom phospholipase A2 (PLA2) that inhibits collagen/ADP-induced platelet aggregation, and induces hypotension in rats (activity abolished in the presence of p-bromophenacyl bromide). PLA2 catalyzes the calcium-dependent hydrolysis of the 2-acyl groups in 3-sn-phosphoglycerides. The polypeptide is Acidic phospholipase A2 BpirPLA2-I (Bothrops pirajai (Piraja's lancehead)).